A 639-amino-acid polypeptide reads, in one-letter code: MTDLPVDEPDRDDGADQPDAGADPATPRGVEAIRAALRTMPSSPGVYRMIDGKGDVLYVGKARNLKRRVINYTQPHRLPVRIQRMIAATLTMEVLTTHTEAEALLLESNLIKKLKPRYNILLRDDKSFPYIEITSDHAFPRIVKFRGTLRKGGEYFGPFASAGAVTSTLTALQKTFLLRTCADNVFASRSRPCLLFQIKRCAAPCVDRVAEADYKALVEEARAFLSGSSKALQHDLAKRMDEAAQALDYEQAAIFRDRIKALTNVQSHQDINLPTLGEADVIACHQAGGQTCVQVFFFRGGRNNGNRSFFPAHAGDEGLPEVLEAFLGQFYAGFPPPREILLLTDIPHHDLVEQALCLRAGHRVRLVVPRRGSRRKLIDHALANAREALGRRLAESSAQRTLLEGTAVAFGLDGPLQRVEIYDNSHISGTHAVGGMVVAGPEGFMKAAYRKFNIRSPDITPGDDYAMMREVMIRRFARARKEDPDRDRGQWPDLVLIDGGLGQLNAVREALAEIGVEDVPLVGVAKGPDRDAGRERFFVPGRPPFMLRHNDPVLYFIQRLRDEAHRFAIGSHRTRRSKAIGVSPLDSVPGIGASRKKALLHHFGSAKAVSQAGLTDLEAVEGISAALAKKLYDHFHSEG.

Residues 1 to 16 (MTDLPVDEPDRDDGAD) show a composition bias toward acidic residues. Positions 1 to 28 (MTDLPVDEPDRDDGADQPDAGADPATPR) are disordered. The span at 17-27 (QPDAGADPATP) shows a compositional bias: low complexity. Residues 42–120 (SSPGVYRMID…IKKLKPRYNI (79 aa)) form the GIY-YIG domain. In terms of domain architecture, UVR spans 230 to 265 (KALQHDLAKRMDEAAQALDYEQAAIFRDRIKALTNV).

The protein belongs to the UvrC family. As to quaternary structure, interacts with UvrB in an incision complex.

It localises to the cytoplasm. Functionally, the UvrABC repair system catalyzes the recognition and processing of DNA lesions. UvrC both incises the 5' and 3' sides of the lesion. The N-terminal half is responsible for the 3' incision and the C-terminal half is responsible for the 5' incision. The sequence is that of UvrABC system protein C from Rhodospirillum rubrum (strain ATCC 11170 / ATH 1.1.1 / DSM 467 / LMG 4362 / NCIMB 8255 / S1).